Reading from the N-terminus, the 125-residue chain is Ribonuclease P protein component (125 aa).

This sequence belongs to the RnpA family. As to quaternary structure, consists of a catalytic RNA component (M1 or rnpB) and a protein subunit.

It catalyses the reaction Endonucleolytic cleavage of RNA, removing 5'-extranucleotides from tRNA precursor.. Its function is as follows. RNaseP catalyzes the removal of the 5'-leader sequence from pre-tRNA to produce the mature 5'-terminus. It can also cleave other RNA substrates such as 4.5S RNA. The protein component plays an auxiliary but essential role in vivo by binding to the 5'-leader sequence and broadening the substrate specificity of the ribozyme. This chain is Ribonuclease P protein component, found in Rhodococcus opacus (strain B4).